A 307-amino-acid polypeptide reads, in one-letter code: Small ribosomal subunit protein uS3 (307 aa).

The KH type-2 domain occupies M17–K86. Positions I201 to K226 are enriched in basic and acidic residues. The tract at residues I201–E265 is disordered. Positions P240 to E265 are enriched in acidic residues.

The protein belongs to the universal ribosomal protein uS3 family. As to quaternary structure, part of the 30S ribosomal subunit.

Its function is as follows. Binds the lower part of the 30S subunit head. This chain is Small ribosomal subunit protein uS3, found in Methanosarcina mazei (strain ATCC BAA-159 / DSM 3647 / Goe1 / Go1 / JCM 11833 / OCM 88) (Methanosarcina frisia).